The primary structure comprises 109 residues: Non-structural protein ORF4a (109 aa).

Interacts with host PRKRA/PACT.

The protein resides in the host cytoplasm. Its function is as follows. DsRNA-binding protein that plays a role in the inhibition of host innate response. Suppresses host PACT-induced activation of RIGI and MDA5 and thereby circumvents the production of type I interferons. Also prevents the activation of host NF-kappa-B. Inhibits the integrated stress response (ISR) in the infected cell by binding to dsRNA and inhibiting EIF2AK2-mediated phosphorylation of EIF2S1/eIF2-alpha. Stress granule formation is thus inhibited, which allows protein synthesis and viral replication. The protein is Non-structural protein ORF4a (ORF4a) of Middle East respiratory syndrome-related coronavirus (isolate United Kingdom/H123990006/2012) (MERS-CoV).